We begin with the raw amino-acid sequence, 288 residues long: ATP synthase gamma chain (288 aa).

It belongs to the ATPase gamma chain family. As to quaternary structure, F-type ATPases have 2 components, CF(1) - the catalytic core - and CF(0) - the membrane proton channel. CF(1) has five subunits: alpha(3), beta(3), gamma(1), delta(1), epsilon(1). CF(0) has three main subunits: a, b and c.

Its subcellular location is the cell membrane. Its function is as follows. Produces ATP from ADP in the presence of a proton gradient across the membrane. The gamma chain is believed to be important in regulating ATPase activity and the flow of protons through the CF(0) complex. This chain is ATP synthase gamma chain, found in Staphylococcus haemolyticus (strain JCSC1435).